The chain runs to 432 residues: Histidinol dehydrogenase (432 aa).

Residues tyrosine 130, glutamine 191, and asparagine 214 each coordinate NAD(+). Substrate is bound by residues serine 237, glutamine 259, and histidine 262. Residues glutamine 259 and histidine 262 each coordinate Zn(2+). Active-site proton acceptor residues include glutamate 327 and histidine 328. Substrate-binding residues include histidine 328, aspartate 361, glutamate 415, and histidine 420. Residue aspartate 361 participates in Zn(2+) binding. Histidine 420 is a Zn(2+) binding site.

It belongs to the histidinol dehydrogenase family. Zn(2+) serves as cofactor.

The enzyme catalyses L-histidinol + 2 NAD(+) + H2O = L-histidine + 2 NADH + 3 H(+). The protein operates within amino-acid biosynthesis; L-histidine biosynthesis; L-histidine from 5-phospho-alpha-D-ribose 1-diphosphate: step 9/9. Functionally, catalyzes the sequential NAD-dependent oxidations of L-histidinol to L-histidinaldehyde and then to L-histidine. This Agrobacterium fabrum (strain C58 / ATCC 33970) (Agrobacterium tumefaciens (strain C58)) protein is Histidinol dehydrogenase.